A 93-amino-acid chain; its full sequence is Secretoglobin family 3A member 2 (93 aa).

Positions methionine 1–alanine 21 are cleaved as a signal peptide.

This sequence belongs to the secretoglobin family. UGRP subfamily. As to quaternary structure, homodimer; disulfide-linked. Monomer. Interacts with APOA1. Highly expressed in lung and trachea. Detected throughout the airway epithelium in lung, with slightly higher expression in large airways. Found in lung submucosal gland acinus where it localizes to serous-like cells. Probably expressed in club cells of the bronchioles. Not detected in other tissues tested.

The protein localises to the secreted. Its function is as follows. Secreted cytokine-like protein. Binds to the scavenger receptor MARCO. Can also bind to pathogens including the Gram-positive bacterium L.monocytogenes, the Gram-negative bacterium P.aeruginosa, and yeast. Strongly inhibits phospholipase A2 (PLA2G1B) activity. Seems to have anti-inflammatory effects in respiratory epithelium. Also has anti-fibrotic activity in lung. May play a role in fetal lung development and maturation. Promotes branching morphogenesis during early stages of lung development. In the pituitary, may inhibit production of follicle-stimulating hormone (FSH) and luteinizing hormone (LH). The chain is Secretoglobin family 3A member 2 (SCGB3A2) from Homo sapiens (Human).